The following is a 251-amino-acid chain: MADESKDTTHFGYRTVAKDEKADMVADVFHSVAAKYDLMNDLMSFGIHRVWKRFTIDCSGVRRGQRVLDLAGGTGDLTAKFSRLVGETGEVVLADINSSMLKVGREKLRNKGIIGNVNYVQANAEALPFPDNYFDCITIAFGLRNVTEKENALASMFRVLKPGGRLLVLEFSKPQFEPLSKAYDAYSFHILPRIGEVVAKDAGSYRYLAESIRMHPDQETLKQMMADVGFENTTYHNLTGGIVALHRGFKF.

S-adenosyl-L-methionine-binding positions include Thr74, Asp95, and 123–124 (NA).

Belongs to the class I-like SAM-binding methyltransferase superfamily. MenG/UbiE family.

It catalyses the reaction a 2-demethylmenaquinol + S-adenosyl-L-methionine = a menaquinol + S-adenosyl-L-homocysteine + H(+). It carries out the reaction a 2-methoxy-6-(all-trans-polyprenyl)benzene-1,4-diol + S-adenosyl-L-methionine = a 5-methoxy-2-methyl-3-(all-trans-polyprenyl)benzene-1,4-diol + S-adenosyl-L-homocysteine + H(+). Its pathway is quinol/quinone metabolism; menaquinone biosynthesis; menaquinol from 1,4-dihydroxy-2-naphthoate: step 2/2. The protein operates within cofactor biosynthesis; ubiquinone biosynthesis. Methyltransferase required for the conversion of demethylmenaquinol (DMKH2) to menaquinol (MKH2) and the conversion of 2-polyprenyl-6-methoxy-1,4-benzoquinol (DDMQH2) to 2-polyprenyl-3-methyl-6-methoxy-1,4-benzoquinol (DMQH2). The polypeptide is Ubiquinone/menaquinone biosynthesis C-methyltransferase UbiE (Erwinia tasmaniensis (strain DSM 17950 / CFBP 7177 / CIP 109463 / NCPPB 4357 / Et1/99)).